A 436-amino-acid polypeptide reads, in one-letter code: 3-ketoacyl-CoA thiolase (436 aa).

The Acyl-thioester intermediate role is filled by Cys99. Residues His392 and Cys422 each act as proton acceptor in the active site.

The protein belongs to the thiolase-like superfamily. Thiolase family. In terms of assembly, heterotetramer of two alpha chains (FadJ) and two beta chains (FadI).

Its subcellular location is the cytoplasm. The catalysed reaction is an acyl-CoA + acetyl-CoA = a 3-oxoacyl-CoA + CoA. It participates in lipid metabolism; fatty acid beta-oxidation. Its function is as follows. Catalyzes the final step of fatty acid oxidation in which acetyl-CoA is released and the CoA ester of a fatty acid two carbons shorter is formed. This chain is 3-ketoacyl-CoA thiolase, found in Escherichia coli O127:H6 (strain E2348/69 / EPEC).